The chain runs to 486 residues: uncharacterized protein (486 aa).

An N-terminal signal peptide occupies residues 1–25 (MGTMRSVYLIIIIILFFAFISLSFG). 2 stretches are compositionally biased toward basic and acidic residues: residues 306 to 316 (KKEEKENEESS) and 326 to 349 (KKEE…KQEK). Residues 306-349 (KKEEKENEESSKTINQMQRHKKEEKSQTQETKKPSKNEMNKQEK) form a disordered region.

This is an uncharacterized protein from Methanocaldococcus jannaschii (strain ATCC 43067 / DSM 2661 / JAL-1 / JCM 10045 / NBRC 100440) (Methanococcus jannaschii).